We begin with the raw amino-acid sequence, 367 residues long: Choline-phosphate cytidylyltransferase A (367 aa).

Met-1 is subject to N-acetylmethionine. A disordered region spans residues 1 to 32; that stretch reads MDAQSSAKVNSRKRRKEAPGPNGATEEDGIPS. An N6-acetyllysine modification is found at Lys-8. Residues Ile-84, Phe-85, His-92, and Lys-122 each contribute to the CTP site. The phosphocholine site is built by Lys-122 and Trp-151. 7 residues coordinate CTP: His-168, Asp-169, Tyr-173, Gln-195, Arg-196, Thr-197, and Ile-200. Amphipathic stretches follow at residues 228-287 and 298-315; these read KELN…EFIG and ALKHMLKEGKGRMLQAIS. Ser-233 carries the post-translational modification Phosphoserine. Positions 272 to 293 are autoinhibitory (AI); it reads IDLIQKWEEKSREFIGSFLEMF. The segment at 313 to 367 is disordered; that stretch reads AISPKQSPSSSPTHERSPSPSFRWPFSGKTSPSSSPASLSRCRAVTCDISEDEED. Ser-315, Ser-319, Ser-321, Ser-322, and Ser-323 each carry phosphoserine. Over residues 315–324 the composition is skewed to polar residues; sequence SPKQSPSSSP. The stretch at 319 to 324 is repeat 1; it reads SPSSSP. The interval 319-348 is 3 X repeats; it reads SPSSSPTHERSPSPSFRWPFSGKTSPSSSP. Thr-325 bears the Phosphothreonine mark. A phosphoserine mark is found at Ser-329, Ser-331, and Ser-333. The 2; approximate repeat unit spans residues 329 to 333; that stretch reads SPSPS. Residues 330 to 352 show a composition bias toward low complexity; the sequence is PSPSFRWPFSGKTSPSSSPASLS. Residue Thr-342 is modified to Phosphothreonine. Phosphoserine occurs at positions 343, 345, 346, 347, 350, and 352. Repeat 3 spans residues 343–348; that stretch reads SPSSSP. Position 358 is a phosphothreonine (Thr-358). Ser-362 carries the phosphoserine modification.

This sequence belongs to the cytidylyltransferase family. Homodimer. The serine residues of the C-terminus are phosphorylated. The inactive soluble form is stabilized by phosphorylation, the active membrane bound form is promoted by anionic lipids or diacylglycerol, and is stabilized by dephosphorylation. Post-translationally, monoubiquitinated by the SCF(FBXL2) complex, leading to proteasomal degradation. As to expression, brain and liver (at protein level). Also found in heart, kidney, spleen, lung, skeletal muscle, ovary and testis.

Its subcellular location is the cytoplasm. It localises to the cytosol. The protein localises to the membrane. It is found in the endoplasmic reticulum membrane. The protein resides in the nucleus. The catalysed reaction is phosphocholine + CTP + H(+) = CDP-choline + diphosphate. It functions in the pathway phospholipid metabolism; phosphatidylcholine biosynthesis; phosphatidylcholine from phosphocholine: step 1/2. With respect to regulation, interconverts between an inactive cytosolic form and an active membrane-bound form. Activation involves disruption of an inhibitory interaction between helices at the base of the active site and the autoinhibitory (AI) region. Functionally, catalyzes the key rate-limiting step in the CDP-choline pathway for phosphatidylcholine biosynthesis. This chain is Choline-phosphate cytidylyltransferase A (Pcyt1a), found in Mus musculus (Mouse).